Here is a 283-residue protein sequence, read N- to C-terminus: Tetraspanin-33 (283 aa).

Residues 1 to 24 lie on the Cytoplasmic side of the membrane; it reads MARRPGVPAAYGDEFSFVSPLVKY. Residues 25–45 traverse the membrane as a helical segment; it reads LLFFFNMLFWVISMVMVAVGV. The Extracellular segment spans residues 46–64; the sequence is YARLMKHAEAALACLAVDP. Residues 65-85 traverse the membrane as a helical segment; sequence AILLIVVGVLMFLLTFCGCIG. The Cytoplasmic portion of the chain corresponds to 86–96; that stretch reads SLRENICLLQT. A helical transmembrane segment spans residues 97-117; the sequence is FSLCLTIVFLLQLAAGILGFV. At 118–235 the chain is on the extracellular side; it reads FSDKARGKVS…DKLVNWIHSN (118 aa). 4 disulfides stabilise this stretch: C156–C224, C157–C189, C173–C183, and C190–C203. N172 carries N-linked (GlcNAc...) asparagine glycosylation. Residues 236–256 form a helical membrane-spanning segment; that stretch reads LFLLGGVALGLAIPQLVGILL. The Cytoplasmic segment spans residues 257–283; the sequence is SQVLVNQIKDQIKLQLYNQQHRADPWY.

This sequence belongs to the tetraspanin (TM4SF) family. Homodimer; disulfide-linked. Interacts (via extracellular domain) with ADAM10 (via extracellular domain). Interacts (via cytoplasmic domain) with PLEKHA7 (via WW domains); the interaction is dependent on PDZD11 being bound to PLEKHA7 and facilitates the docking of ADAM10 to zonula adherens. In terms of tissue distribution, predominantly expressed in erythroblasts.

The protein localises to the cell membrane. Its subcellular location is the cell junction. The protein resides in the adherens junction. It localises to the cytoplasm. Part of TspanC8 subgroup, composed of 6 members that interact with the transmembrane metalloprotease ADAM10. This interaction is required for ADAM10 exit from the endoplasmic reticulum and for enzymatic maturation and trafficking to the cell surface as well as substrate specificity. Different TspanC8/ADAM10 complexes have distinct substrates. Plays an important role in normal erythropoiesis. It has a role in the differentiation of erythroid progenitors. Negatively regulates ligand-induced Notch activity probably by regulating ADAM10 activity. Mediates docking of ADAM10 to zonula adherens by interacting with ADAM10 and, in a PDZD11-dependent manner, with the zonula adherens protein PLEKHA7. This Mus musculus (Mouse) protein is Tetraspanin-33 (Tspan33).